Consider the following 254-residue polypeptide: 3-dehydroquinate dehydratase (254 aa).

Residues 47 to 49 (EWR) and Arg83 each bind 3-dehydroquinate. The active-site Proton donor/acceptor is the His144. The active-site Schiff-base intermediate with substrate is the Lys171. The 3-dehydroquinate site is built by Arg214, Ser233, and Gln237.

It belongs to the type-I 3-dehydroquinase family. Homodimer.

It carries out the reaction 3-dehydroquinate = 3-dehydroshikimate + H2O. The protein operates within metabolic intermediate biosynthesis; chorismate biosynthesis; chorismate from D-erythrose 4-phosphate and phosphoenolpyruvate: step 3/7. Its function is as follows. Involved in the third step of the chorismate pathway, which leads to the biosynthesis of aromatic amino acids. Catalyzes the cis-dehydration of 3-dehydroquinate (DHQ) and introduces the first double bond of the aromatic ring to yield 3-dehydroshikimate. The chain is 3-dehydroquinate dehydratase from Bacillus licheniformis (strain ATCC 14580 / DSM 13 / JCM 2505 / CCUG 7422 / NBRC 12200 / NCIMB 9375 / NCTC 10341 / NRRL NRS-1264 / Gibson 46).